Consider the following 525-residue polypeptide: GMP synthase [glutamine-hydrolyzing] (525 aa).

Residues 9 to 207 (RILILDFGSQ…ILDICGCEAL (199 aa)) form the Glutamine amidotransferase type-1 domain. C86 acts as the Nucleophile in catalysis. Catalysis depends on residues H181 and E183. The GMPS ATP-PPase domain maps to 208 to 400 (WTPSKIAEDA…LGLPYDMVYR (193 aa)). 235–241 (SGGVDSS) provides a ligand contact to ATP.

In terms of assembly, homodimer.

It carries out the reaction XMP + L-glutamine + ATP + H2O = GMP + L-glutamate + AMP + diphosphate + 2 H(+). It participates in purine metabolism; GMP biosynthesis; GMP from XMP (L-Gln route): step 1/1. In terms of biological role, catalyzes the synthesis of GMP from XMP. This chain is GMP synthase [glutamine-hydrolyzing], found in Pseudomonas savastanoi pv. phaseolicola (strain 1448A / Race 6) (Pseudomonas syringae pv. phaseolicola (strain 1448A / Race 6)).